The chain runs to 415 residues: Plasminogen activator inhibitor 2, macrophage (415 aa).

N-linked (GlcNAc...) asparagine glycans are attached at residues Asn23, Asn75, Asn261, and Asn339.

It belongs to the serpin family. Ov-serpin subfamily. In terms of assembly, interacts with PSMB1. The signal sequence is not cleaved.

It is found in the cytoplasm. It localises to the secreted. The protein resides in the extracellular space. Its function is as follows. Inhibits urokinase-type plasminogen activator. The monocyte derived PAI-2 is distinct from the endothelial cell-derived PAI-1. Not required for normal murine development or survival. The sequence is that of Plasminogen activator inhibitor 2, macrophage (Serpinb2) from Mus musculus (Mouse).